A 970-amino-acid chain; its full sequence is Sodium/calcium exchanger 1 (970 aa).

A signal peptide spans Met1 to Ala32. Residues Glu33–Lys71 lie on the Extracellular side of the membrane. Residue Asn41 is glycosylated (N-linked (GlcNAc...) asparagine). The chain crosses the membrane as a helical span at residues Ile72–Ile92. Residues Ala93–Asn133 are Cytoplasmic-facing. The helical transmembrane segment at Leu134–Cys154 threads the bilayer. Residues Ala138 to Ile178 form an Alpha-1 repeat. Residues Gly155–Thr167 lie on the Extracellular side of the membrane. N-linked (GlcNAc...) asparagine glycosylation is present at Asn157. A helical transmembrane segment spans residues Ile168–Pro188. Over Asp189–Phe201 the chain is Cytoplasmic. The chain crosses the membrane as a helical span at residues Phe202–Ser222. Residues Ser223 to Glu228 lie on the Extracellular side of the membrane. Residues Val229–Ala249 form a helical membrane-spanning segment. Over Asp250–Gly797 the chain is Cytoplasmic. Residues Arg251–Gly270 form a putative calmodulin-binding region region. Residues Ser282 and Ser389 each carry the phosphoserine modification. 2 Calx-beta domains span residues Val393–Ser493 and Ala524–Gly624. Residues Glu417, Asp453, Asp478, Asp479, Ile481, Glu483, Glu486, Asp530, Asp531, Asp532, Glu548, Asp584, Asp610, Glu611, Glu612, and Glu715 each coordinate Ca(2+). A helical membrane pass occupies residues Trp798–Leu818. Topologically, residues Ala819–His821 are extracellular. A helical transmembrane segment spans residues Phe822 to Thr842. The stretch at Ala839–Val875 is one Alpha-2 repeat. Topologically, residues Ser843–Asn871 are cytoplasmic. Residues Ala872–Ala892 traverse the membrane as a helical segment. Residues Asn893 to Thr903 are Extracellular-facing. A helical transmembrane segment spans residues Leu904–Tyr924. The Cytoplasmic portion of the chain corresponds to Arg925 to Lys941. The helical transmembrane segment at Leu942–Glu962 threads the bilayer. Residues Ala963–Phe970 are Extracellular-facing.

Belongs to the Ca(2+):cation antiporter (CaCA) (TC 2.A.19) family. SLC8 subfamily.

It localises to the cell membrane. It catalyses the reaction Ca(2+)(in) + 3 Na(+)(out) = Ca(2+)(out) + 3 Na(+)(in). Activated by micromolar levels of Ca(2+). Functionally, mediates the exchange of one Ca(2+) ion against three to four Na(+) ions across the cell membrane, and thereby contributes to the regulation of cytoplasmic Ca(2+) levels and Ca(2+)-dependent cellular processes. Contributes to Ca(2+) transport during excitation-contraction coupling in muscle. In a first phase, voltage-gated channels mediate the rapid increase of cytoplasmic Ca(2+) levels due to release of Ca(2+) stores from the endoplasmic reticulum. SLC8A1 mediates the export of Ca(2+) from the cell during the next phase, so that cytoplasmic Ca(2+) levels rapidly return to baseline. Required for normal embryonic heart development and the onset of heart contractions. The sequence is that of Sodium/calcium exchanger 1 (SLC8A1) from Bos taurus (Bovine).